The primary structure comprises 88 residues: UPF0297 protein BLi02868/BL02032 (88 aa).

The protein belongs to the UPF0297 family.

The polypeptide is UPF0297 protein BLi02868/BL02032 (Bacillus licheniformis (strain ATCC 14580 / DSM 13 / JCM 2505 / CCUG 7422 / NBRC 12200 / NCIMB 9375 / NCTC 10341 / NRRL NRS-1264 / Gibson 46)).